The sequence spans 271 residues: Thiazole synthase (271 aa).

The active-site Schiff-base intermediate with DXP is lysine 95. 1-deoxy-D-xylulose 5-phosphate is bound by residues glycine 156, 182–183, and 204–205; these read AG and NT.

The protein belongs to the ThiG family. As to quaternary structure, homotetramer. Forms heterodimers with either ThiH or ThiS.

It is found in the cytoplasm. The catalysed reaction is [ThiS sulfur-carrier protein]-C-terminal-Gly-aminoethanethioate + 2-iminoacetate + 1-deoxy-D-xylulose 5-phosphate = [ThiS sulfur-carrier protein]-C-terminal Gly-Gly + 2-[(2R,5Z)-2-carboxy-4-methylthiazol-5(2H)-ylidene]ethyl phosphate + 2 H2O + H(+). It functions in the pathway cofactor biosynthesis; thiamine diphosphate biosynthesis. Catalyzes the rearrangement of 1-deoxy-D-xylulose 5-phosphate (DXP) to produce the thiazole phosphate moiety of thiamine. Sulfur is provided by the thiocarboxylate moiety of the carrier protein ThiS. In vitro, sulfur can be provided by H(2)S. In Shewanella amazonensis (strain ATCC BAA-1098 / SB2B), this protein is Thiazole synthase.